Here is a 581-residue protein sequence, read N- to C-terminus: uncharacterized protein (581 aa).

It belongs to the UbiD family.

This is an uncharacterized protein from Chlamydia caviae (strain ATCC VR-813 / DSM 19441 / 03DC25 / GPIC) (Chlamydophila caviae).